The chain runs to 450 residues: Tubulin alpha chain (450 aa).

Residue Gln11 coordinates GTP. Lys40 is subject to N6-acetyllysine. 7 residues coordinate GTP: Glu71, Ser140, Gly144, Thr145, Thr179, Asn206, and Asn228. Glu71 is a binding site for Mg(2+). Glu254 is a catalytic residue.

The protein belongs to the tubulin family. Dimer of alpha and beta chains. A typical microtubule is a hollow water-filled tube with an outer diameter of 25 nm and an inner diameter of 15 nM. Alpha-beta heterodimers associate head-to-tail to form protofilaments running lengthwise along the microtubule wall with the beta-tubulin subunit facing the microtubule plus end conferring a structural polarity. Microtubules usually have 13 protofilaments but different protofilament numbers can be found in some organisms and specialized cells. It depends on Mg(2+) as a cofactor. Post-translationally, undergoes a tyrosination/detyrosination cycle, the cyclic removal and re-addition of a C-terminal tyrosine residue by the enzymes tubulin tyrosine carboxypeptidase (TTCP) and tubulin tyrosine ligase (TTL), respectively. In terms of processing, acetylation of alpha chains at Lys-40 stabilizes microtubules and affects affinity and processivity of microtubule motors. This modification has a role in multiple cellular functions, ranging from cell motility, cell cycle progression or cell differentiation to intracellular trafficking and signaling.

The protein localises to the cytoplasm. It is found in the cytoskeleton. The enzyme catalyses GTP + H2O = GDP + phosphate + H(+). Functionally, tubulin is the major constituent of microtubules, a cylinder consisting of laterally associated linear protofilaments composed of alpha- and beta-tubulin heterodimers. Microtubules grow by the addition of GTP-tubulin dimers to the microtubule end, where a stabilizing cap forms. Below the cap, tubulin dimers are in GDP-bound state, owing to GTPase activity of alpha-tubulin. The protein is Tubulin alpha chain of Lepidoglyphus destructor (Storage mite).